The chain runs to 200 residues: Ciliary neurotrophic factor (200 aa).

The protein belongs to the CNTF family. In terms of assembly, homodimer. Nervous system.

Its subcellular location is the cytoplasm. In terms of biological role, CNTF is a survival factor for various neuronal cell types. Seems to prevent the degeneration of motor axons after axotomy. This chain is Ciliary neurotrophic factor (CNTF), found in Homo sapiens (Human).